We begin with the raw amino-acid sequence, 529 residues long: Laccase-1 (529 aa).

A signal peptide spans 1 to 23; sequence MFPGARILATLTLALHLLHGTHA. 3 consecutive Plastocyanin-like domains span residues 25-159, 170-312, and 380-499; these read IGPT…FIVY, DVDN…ILRY, and TAPV…FAED. N-linked (GlcNAc...) asparagine glycosylation occurs at Asn57. Residues His96, His98, His141, and His143 each coordinate Cu cation. Cystine bridges form between Cys117/Cys514 and Cys149/Cys236. Asn239 and Asn282 each carry an N-linked (GlcNAc...) asparagine glycan. 7 residues coordinate Cu cation: His425, His428, His430, His481, Cys482, His483, and His487.

It belongs to the multicopper oxidase family. Cu cation is required as a cofactor.

The protein localises to the secreted. The enzyme catalyses 4 hydroquinone + O2 = 4 benzosemiquinone + 2 H2O. Functionally, lignin degradation and detoxification of lignin-derived products. The chain is Laccase-1 (POX1) from Pleurotus ostreatus (Oyster mushroom).